The chain runs to 329 residues: DNA-directed RNA polymerase subunit alpha (329 aa).

Positions 1-235 (MLGSVTDFLK…EQLDAFVDLR (235 aa)) are alpha N-terminal domain (alpha-NTD). Positions 249 to 329 (FDPILLRPVD…NWPPASLADN (81 aa)) are alpha C-terminal domain (alpha-CTD).

It belongs to the RNA polymerase alpha chain family. Homodimer. The RNAP catalytic core consists of 2 alpha, 1 beta, 1 beta' and 1 omega subunit. When a sigma factor is associated with the core the holoenzyme is formed, which can initiate transcription.

It catalyses the reaction RNA(n) + a ribonucleoside 5'-triphosphate = RNA(n+1) + diphosphate. Functionally, DNA-dependent RNA polymerase catalyzes the transcription of DNA into RNA using the four ribonucleoside triphosphates as substrates. In Tolumonas auensis (strain DSM 9187 / NBRC 110442 / TA 4), this protein is DNA-directed RNA polymerase subunit alpha.